The chain runs to 62 residues: Mu-elapitoxin-Na1a (62 aa).

4 disulfide bridges follow: cysteine 3–cysteine 22, cysteine 15–cysteine 40, cysteine 44–cysteine 55, and cysteine 56–cysteine 61.

It belongs to the three-finger toxin family. Short-chain subfamily. Orphan group XV sub-subfamily. As to expression, expressed by the venom gland.

Its subcellular location is the secreted. Functionally, potent inhibitor of human Nav1.8/SCN10A (IC(50)=141-380 nM). Is highly selective for this channel and acts in a reversible manner. Shows a depolarizing shift of activation and hyperpolarizing shift of inactivation. In contrast to the very similar cytotoxin A5 (AC P62375), does not seem to bind integrin alpha-V/beta-3, since it does not promote or inhibit the proliferation of HUVECs and C-PAE cells. In vivo, in rodent models of inflammatory and neuropathic pain, it alleviates nociceptive behaviors more potently than does morphine. It displays no evident cytotoxic, hemolytic and cardiotoxic activities and produces no obvious adverse responses in mice even at a dose 30-fold higher than that producing a significant analgesic effect. This is Mu-elapitoxin-Na1a from Naja atra (Chinese cobra).